The primary structure comprises 406 residues: Acetate kinase (406 aa).

N8 serves as a coordination point for Mg(2+). Residue K15 coordinates ATP. R92 lines the substrate pocket. D149 acts as the Proton donor/acceptor in catalysis. Residues 209-213 (HLGNG), 283-285 (DFR), and 331-335 (GVGEN) each bind ATP. E385 provides a ligand contact to Mg(2+).

This sequence belongs to the acetokinase family. In terms of assembly, homodimer. The cofactor is Mg(2+). Requires Mn(2+) as cofactor.

The protein localises to the cytoplasm. It catalyses the reaction acetate + ATP = acetyl phosphate + ADP. It participates in metabolic intermediate biosynthesis; acetyl-CoA biosynthesis; acetyl-CoA from acetate: step 1/2. Functionally, catalyzes the formation of acetyl phosphate from acetate and ATP. Can also catalyze the reverse reaction. In Corynebacterium aurimucosum (strain ATCC 700975 / DSM 44827 / CIP 107346 / CN-1) (Corynebacterium nigricans), this protein is Acetate kinase.